Consider the following 143-residue polypeptide: Transcriptional regulator MraZ (143 aa).

SpoVT-AbrB domains are found at residues 5-47 (EYEH…PRSV) and 76-119 (AADM…APRR).

The protein belongs to the MraZ family. As to quaternary structure, forms oligomers.

Its subcellular location is the cytoplasm. It localises to the nucleoid. In Roseiflexus sp. (strain RS-1), this protein is Transcriptional regulator MraZ.